Consider the following 85-residue polypeptide: MAVKIRLRRMGAKKAPFYRVVVADSRSPRDGRFVEEIGYYNPISEPKAIKIDEEKAIKWVKNGAQPTDVVKRLFKEAGIDEKLSK.

This sequence belongs to the bacterial ribosomal protein bS16 family.

The sequence is that of Small ribosomal subunit protein bS16 from Clostridium novyi (strain NT).